We begin with the raw amino-acid sequence, 961 residues long: Mitogen-activated protein kinase kinase kinase 13-A (961 aa).

Residues 88-118 (LRDQDEPENTAPQGSSHSGDGGSYSGNEDIR) are disordered. The Protein kinase domain occupies 169–410 (ISELQWLGSG…FRQILMHLDI (242 aa)). ATP is bound by residues 175 to 183 (LGSGAQGAV) and Lys-196. Catalysis depends on Asp-280, which acts as the Proton acceptor. 2 leucine-zipper regions span residues 434 to 455 (VKKH…DEEL) and 487 to 508 (LSAI…EQAV). A coiled-coil region spans residues 458 to 497 (RRREELRHALDIREHYERKLERANNLYMELSAIMLQLEVR). Disordered regions lie at residues 513–600 (PGTY…SKGS), 615–637 (ALSQ…CSPY), and 799–883 (RRIR…KLDD). The segment covering 560 to 578 (SAEGSAASASPISGSPKTS) has biased composition (low complexity). The span at 584–596 (NRYRSKPRHRRVN) shows a compositional bias: basic residues. Positions 810 to 823 (ESSEEEEGEVDSEV) are enriched in acidic residues. Residues 811-824 (SSEEEEGEVDSEVE) are acidic. Residues 837–851 (KCQSYSTFSSENFSV) are compositionally biased toward polar residues.

The protein belongs to the protein kinase superfamily. Ser/Thr protein kinase family.

It localises to the cytoplasm. The protein localises to the membrane. It catalyses the reaction L-seryl-[protein] + ATP = O-phospho-L-seryl-[protein] + ADP + H(+). The enzyme catalyses L-threonyl-[protein] + ATP = O-phospho-L-threonyl-[protein] + ADP + H(+). In terms of biological role, may have a role in the JNK signaling pathway. The polypeptide is Mitogen-activated protein kinase kinase kinase 13-A (map3k13-a) (Xenopus laevis (African clawed frog)).